A 729-amino-acid chain; its full sequence is Replication restart protein PriA (729 aa).

Residues 209–376 (QTALGRFRSF…QSGAYRLLQL (168 aa)) form the Helicase ATP-binding domain. 222–229 (GITGSGKT) is a binding site for ATP. A DEAH box motif is present at residues 319-322 (DEEH). Zn(2+) contacts are provided by Cys436, Cys439, Cys445, Cys448, Cys463, Cys466, Cys476, and Cys479. The region spanning 471 to 623 (PIPFKCPDCG…YAVFAENELN (153 aa)) is the Helicase C-terminal domain.

It belongs to the helicase family. PriA subfamily. In terms of assembly, interacts with PriB with high affinity in the absence of DNA. Component of the replication restart primosome. Zn(2+) is required as a cofactor.

It catalyses the reaction Couples ATP hydrolysis with the unwinding of duplex DNA by translocating in the 3'-5' direction.. The catalysed reaction is ATP + H2O = ADP + phosphate + H(+). Its activity is regulated as follows. Helicase and ATPase activities on forked DNA are stimulated by PriB; E.coli PriB does not stimulate this helicase. PriA:PriB complex-catalyzed duplex DNA winding is inhibited by CGS 15943 (CHEBI:131351). CGS 15943 decreases ATP hydrolysis and decreases PriA's affinity for DNA. Functionally, initiates the restart of stalled replication forks, which reloads the replicative helicase on sites other than the origin of replication. Recognizes and binds to abandoned replication forks and remodels them to uncover a helicase loading site. Promotes assembly of the primosome at these replication forks. In terms of biological role, DNA helicase with greatest unwinding activity on forked DNA substrates with relatively short duplex lagging strand arms. A DNA-dependent ATPase. Required for DNA transformation and DNA repair. Binds single-stranded (ss)DNA and replication fork-like DNA but not double-stranded (ds)DNA. This is Replication restart protein PriA from Neisseria gonorrhoeae (strain ATCC 700825 / FA 1090).